A 401-amino-acid chain; its full sequence is Divinyl chlorophyllide a 8-vinyl-reductase, chloroplastic (401 aa).

A compositionally biased stretch (polar residues) spans 1–10 (MATILLSSRL). The interval 1–26 (MATILLSSRLPTTGTATPSPTRPAPR) is disordered. A chloroplast-targeting transit peptide spans 1–54 (MATILLSSRLPTTGTATPSPTRPAPRFLSFPGTAIRRRGRGPLLASSAVSPPAP).

The protein localises to the plastid. The protein resides in the chloroplast. The catalysed reaction is protochlorophyllide a + NADP(+) = 3,8-divinyl protochlorophyllide a + NADPH + H(+). The protein operates within porphyrin-containing compound metabolism; chlorophyll biosynthesis. Functionally, catalyzes the conversion of divinyl chlorophyllide to monovinyl chlorophyllide. Reduces the 8-vinyl group of the tetrapyrrole to an ethyl group using NADPH as the reductant. Can use (3,8-divinyl)-chlorophyllide a (DV-Chlidea) &gt; (3,8-divinyl)-chlorophyll a (DV-Chla) &gt; (3,8-divinyl)-protochlorophyllide a (DV-Pchlidea) &gt; (3,8-divinyl)-magnesium-protoporphyrin IX monomethyl ester (DV-MPE) &gt; (3,8-divinyl)-magnesium-protoporphyrin IX (DV-Mg-Proto) as substrates. The protein is Divinyl chlorophyllide a 8-vinyl-reductase, chloroplastic (DVR) of Zea mays (Maize).